The chain runs to 556 residues: Secreted RxLR effector protein 114 (556 aa).

The signal sequence occupies residues 1 to 19; the sequence is MCGAHFVAIALLVAAGCQT. Disordered stretches follow at residues 43–76, 108–138, and 389–408; these read LQSR…GVLK, NQLK…DSDK, and NDKS…EDWN. The RxLR-dEER signature appears at 46–66; sequence RNLRESRDSKDDLLSAGDEER. Basic and acidic residues predominate over residues 47-67; sequence NLRESRDSKDDLLSAGDEERT.

This sequence belongs to the RxLR effector family.

It is found in the secreted. The protein localises to the host cell. In terms of biological role, secreted effector that partially suppresses the host cell death induced by cell death-inducing proteins. The chain is Secreted RxLR effector protein 114 from Plasmopara viticola (Downy mildew of grapevine).